The sequence spans 407 residues: 1-deoxy-D-xylulose 5-phosphate reductoisomerase (407 aa).

Residues threonine 25, glycine 26, serine 27, isoleucine 28, asparagine 53, and asparagine 136 each contribute to the NADPH site. Lysine 137 provides a ligand contact to 1-deoxy-D-xylulose 5-phosphate. Glutamate 138 is a binding site for NADPH. Mn(2+) is bound at residue aspartate 162. Serine 163, glutamate 164, serine 188, and histidine 211 together coordinate 1-deoxy-D-xylulose 5-phosphate. A Mn(2+)-binding site is contributed by glutamate 164. An NADPH-binding site is contributed by glycine 217. Residues serine 224, asparagine 229, lysine 230, and glutamate 233 each coordinate 1-deoxy-D-xylulose 5-phosphate. Glutamate 233 contacts Mn(2+).

The protein belongs to the DXR family. Requires Mg(2+) as cofactor. The cofactor is Mn(2+).

The enzyme catalyses 2-C-methyl-D-erythritol 4-phosphate + NADP(+) = 1-deoxy-D-xylulose 5-phosphate + NADPH + H(+). The protein operates within isoprenoid biosynthesis; isopentenyl diphosphate biosynthesis via DXP pathway; isopentenyl diphosphate from 1-deoxy-D-xylulose 5-phosphate: step 1/6. Functionally, catalyzes the NADPH-dependent rearrangement and reduction of 1-deoxy-D-xylulose-5-phosphate (DXP) to 2-C-methyl-D-erythritol 4-phosphate (MEP). This is 1-deoxy-D-xylulose 5-phosphate reductoisomerase from Afipia carboxidovorans (strain ATCC 49405 / DSM 1227 / KCTC 32145 / OM5) (Oligotropha carboxidovorans).